The sequence spans 175 residues: MSIINFWRQFGRRYFWSHLLLGMVAAGIGMPSLVSAHAENPSQTDTPSSQNRQSQALIAFDNLFLRQSVQNPASSFTFNYWQQHAVKNVIKQLSFAFTIHSPELMVKAKDEPSPVANVAEVMLDTLYALLTQAPSSTLVNLPISRGVLTENRISYHTGLWLAQIRGIRAGPYLTA.

The first 38 residues, 1 to 38 (MSIINFWRQFGRRYFWSHLLLGMVAAGIGMPSLVSAHA), serve as a signal peptide directing secretion.

The protein belongs to the SecM family.

It is found in the cytoplasm. It localises to the cytosol. The protein resides in the periplasm. Its function is as follows. Regulates secA expression by translational coupling of the secM secA operon. Translational pausing at a specific Pro residue 5 residues before the end of the protein may allow disruption of a mRNA repressor helix that normally suppresses secA translation initiation. The polypeptide is Secretion monitor (Proteus mirabilis (strain HI4320)).